A 276-amino-acid chain; its full sequence is MDWILICKALILGVVEGLTEFLPVSSTGHLIVAGSFLNFNDAHAKTFDVVIQFGAILAVCWEYRQRIVSIVTGLPSRPDAQRFTLNVVIATIPAIALGLLFEKKIKAVLFSPVPVAFALVVGGAIILWAEARQRERREPPRVQSIDALTPLDALKVGLAQCFALVPGMSRSGSTIIGGMLFGLDRRVATEFSFFLAIPIIFGATLYETVKDWQAFTVDSLGLFALGLVAAFVSAFVCVRWLLRFVATHDFTVFAWYRIAFGLFVLLVGYSGWLNWA.

7 helical membrane passes run 4–24 (ILIC…FLPV), 45–62 (KTFD…VCWE), 83–103 (FTLN…LFEK), 108–128 (VLFS…IILW), 187–207 (VATE…TLYE), 217–237 (VDSL…AFVC), and 252–272 (VFAW…YSGW).

Belongs to the UppP family.

The protein resides in the cell inner membrane. The enzyme catalyses di-trans,octa-cis-undecaprenyl diphosphate + H2O = di-trans,octa-cis-undecaprenyl phosphate + phosphate + H(+). Its function is as follows. Catalyzes the dephosphorylation of undecaprenyl diphosphate (UPP). Confers resistance to bacitracin. The chain is Undecaprenyl-diphosphatase 1 from Burkholderia ambifaria (strain ATCC BAA-244 / DSM 16087 / CCUG 44356 / LMG 19182 / AMMD) (Burkholderia cepacia (strain AMMD)).